A 364-amino-acid polypeptide reads, in one-letter code: Transcriptional regulator ICP22 homolog (364 aa).

Disordered stretches follow at residues 1-73 and 173-364; these read MDRV…HGAR and VIEG…AAAP. Positions 12-46 are enriched in pro residues; sequence VPSPPFSPVDPPGPRPTTPVPGSSPPSPASTPTPP. 3 stretches are compositionally biased toward acidic residues: residues 181 to 191, 207 to 286, and 294 to 343; these read EECDVDEDDAG, CEDD…DGSD, and DGGD…GEGE. The segment covering 355–364 has biased composition (low complexity); that stretch reads RAPTRPAAAP.

The protein belongs to the herpesviridae ICP22 family.

This chain is Transcriptional regulator ICP22 homolog (RSP40), found in Sus scrofa (Pig).